The chain runs to 238 residues: Ubiquinone biosynthesis O-methyltransferase (238 aa).

S-adenosyl-L-methionine is bound by residues Arg-40, Gly-59, Asp-80, and Met-124.

It belongs to the methyltransferase superfamily. UbiG/COQ3 family.

The enzyme catalyses a 3-demethylubiquinol + S-adenosyl-L-methionine = a ubiquinol + S-adenosyl-L-homocysteine + H(+). It catalyses the reaction a 3-(all-trans-polyprenyl)benzene-1,2-diol + S-adenosyl-L-methionine = a 2-methoxy-6-(all-trans-polyprenyl)phenol + S-adenosyl-L-homocysteine + H(+). Its pathway is cofactor biosynthesis; ubiquinone biosynthesis. Functionally, O-methyltransferase that catalyzes the 2 O-methylation steps in the ubiquinone biosynthetic pathway. The protein is Ubiquinone biosynthesis O-methyltransferase of Ralstonia nicotianae (strain ATCC BAA-1114 / GMI1000) (Ralstonia solanacearum).